Reading from the N-terminus, the 414-residue chain is UDP-N-acetylglucosamine 1-carboxyvinyltransferase (414 aa).

Lys19–Asn20 is a phosphoenolpyruvate binding site. Arg89 is a binding site for UDP-N-acetyl-alpha-D-glucosamine. Catalysis depends on Cys113, which acts as the Proton donor. Cys113 is subject to 2-(S-cysteinyl)pyruvic acid O-phosphothioketal. UDP-N-acetyl-alpha-D-glucosamine-binding positions include Arg118 to Leu122, Asp301, and Val323.

Belongs to the EPSP synthase family. MurA subfamily.

The protein localises to the cytoplasm. It carries out the reaction phosphoenolpyruvate + UDP-N-acetyl-alpha-D-glucosamine = UDP-N-acetyl-3-O-(1-carboxyvinyl)-alpha-D-glucosamine + phosphate. The protein operates within cell wall biogenesis; peptidoglycan biosynthesis. Cell wall formation. Adds enolpyruvyl to UDP-N-acetylglucosamine. In Bdellovibrio bacteriovorus (strain ATCC 15356 / DSM 50701 / NCIMB 9529 / HD100), this protein is UDP-N-acetylglucosamine 1-carboxyvinyltransferase.